Consider the following 1132-residue polypeptide: Phytochrome B (1132 aa).

Residues 1 to 11 (MASGSRTKHSH) are compositionally biased toward basic residues. A disordered region spans residues 1 to 27 (MASGSRTKHSHQSGQGQVQAQSSGTSN). The segment covering 12 to 26 (QSGQGQVQAQSSGTS) has biased composition (low complexity). One can recognise a GAF domain in the interval 231–409 (DVKLLCDTVV…AFGLQLNMEL (179 aa)). Residue C336 participates in phytochromobilin binding. 2 PAS domains span residues 623–694 (VARE…LRGE) and 757–828 (DYKA…MIVL). The region spanning 905 to 1125 (YLCQEIKSPL…LIILDLPMTR (221 aa)) is the Histidine kinase domain.

The protein belongs to the phytochrome family. As to quaternary structure, homodimer. Post-translationally, contains one covalently linked phytochromobilin chromophore.

In terms of biological role, regulatory photoreceptor which exists in two forms that are reversibly interconvertible by light: the Pr form that absorbs maximally in the red region of the spectrum and the Pfr form that absorbs maximally in the far-red region. Photoconversion of Pr to Pfr induces an array of morphogenic responses, whereas reconversion of Pfr to Pr cancels the induction of those responses. Pfr controls the expression of a number of nuclear genes including those encoding the small subunit of ribulose-bisphosphate carboxylase, chlorophyll A/B binding protein, protochlorophyllide reductase, rRNA, etc. It also controls the expression of its own gene(s) in a negative feedback fashion. This Nicotiana tabacum (Common tobacco) protein is Phytochrome B (PHYB).